The primary structure comprises 163 residues: Phosphopantetheine adenylyltransferase (163 aa).

Residue Thr10 coordinates substrate. Residues 10-11 (TF) and His18 each bind ATP. The substrate site is built by Lys42, Leu74, and Arg88. Residues 89 to 91 (GLR), Glu99, and 124 to 130 (NSFISST) contribute to the ATP site.

Belongs to the bacterial CoaD family. Homohexamer. It depends on Mg(2+) as a cofactor.

The protein resides in the cytoplasm. The catalysed reaction is (R)-4'-phosphopantetheine + ATP + H(+) = 3'-dephospho-CoA + diphosphate. It participates in cofactor biosynthesis; coenzyme A biosynthesis; CoA from (R)-pantothenate: step 4/5. Functionally, reversibly transfers an adenylyl group from ATP to 4'-phosphopantetheine, yielding dephospho-CoA (dPCoA) and pyrophosphate. The protein is Phosphopantetheine adenylyltransferase of Shewanella sp. (strain W3-18-1).